The sequence spans 63 residues: Large ribosomal subunit protein uL30 (63 aa).

Belongs to the universal ribosomal protein uL30 family. As to quaternary structure, part of the 50S ribosomal subunit.

The polypeptide is Large ribosomal subunit protein uL30 (Rickettsia prowazekii (strain Madrid E)).